Reading from the N-terminus, the 106-residue chain is Putative double-stranded DNA mimic protein VV1228 (106 aa).

This sequence belongs to the putative dsDNA mimic protein family.

Its function is as follows. May act as a double-stranded DNA (dsDNA) mimic. Probably regulates the activity of a dsDNA-binding protein. This chain is Putative double-stranded DNA mimic protein VV1228, found in Vibrio vulnificus (strain YJ016).